Reading from the N-terminus, the 307-residue chain is Ribonuclease HIII (307 aa).

Positions 93–307 (MSVIGSDEVG…ANTQKAKKWL (215 aa)) constitute an RNase H type-2 domain. Positions 99, 100, and 204 each coordinate a divalent metal cation.

This sequence belongs to the RNase HII family. RnhC subfamily. Mn(2+) serves as cofactor. It depends on Mg(2+) as a cofactor.

It is found in the cytoplasm. It catalyses the reaction Endonucleolytic cleavage to 5'-phosphomonoester.. Endonuclease that specifically degrades the RNA of RNA-DNA hybrids. This chain is Ribonuclease HIII, found in Bacillus pumilus (strain SAFR-032).